Consider the following 41-residue polypeptide: U-megalopygitoxin(4)-Mo5 (41 aa).

Positions Met1 to Ala23 are cleaved as a signal peptide.

This sequence belongs to the caterpillar 4 family. As to expression, expressed by the venom apparatus.

Its subcellular location is the secreted. Functionally, probable toxin. This is U-megalopygitoxin(4)-Mo5 from Megalopyge opercularis (Southern flannel moth).